We begin with the raw amino-acid sequence, 37 residues long: Cytochrome b6-f complex subunit 5 (37 aa).

The helical transmembrane segment at 5–25 (LLSGIVLGLIPITLAGLFVTA) threads the bilayer.

This sequence belongs to the PetG family. As to quaternary structure, the 4 large subunits of the cytochrome b6-f complex are cytochrome b6, subunit IV (17 kDa polypeptide, PetD), cytochrome f and the Rieske protein, while the 4 small subunits are PetG, PetL, PetM and PetN. The complex functions as a dimer.

It is found in the plastid. It localises to the chloroplast thylakoid membrane. Component of the cytochrome b6-f complex, which mediates electron transfer between photosystem II (PSII) and photosystem I (PSI), cyclic electron flow around PSI, and state transitions. PetG is required for either the stability or assembly of the cytochrome b6-f complex. This Angiopteris evecta (Mule's foot fern) protein is Cytochrome b6-f complex subunit 5.